The chain runs to 336 residues: UDP-3-O-acylglucosamine N-acyltransferase (336 aa).

Residue His-233 is the Proton acceptor of the active site.

The protein belongs to the transferase hexapeptide repeat family. LpxD subfamily. In terms of assembly, homotrimer.

It catalyses the reaction a UDP-3-O-[(3R)-3-hydroxyacyl]-alpha-D-glucosamine + a (3R)-hydroxyacyl-[ACP] = a UDP-2-N,3-O-bis[(3R)-3-hydroxyacyl]-alpha-D-glucosamine + holo-[ACP] + H(+). It participates in bacterial outer membrane biogenesis; LPS lipid A biosynthesis. Catalyzes the N-acylation of UDP-3-O-acylglucosamine using 3-hydroxyacyl-ACP as the acyl donor. Is involved in the biosynthesis of lipid A, a phosphorylated glycolipid that anchors the lipopolysaccharide to the outer membrane of the cell. The polypeptide is UDP-3-O-acylglucosamine N-acyltransferase (Helicobacter pylori (strain HPAG1)).